The primary structure comprises 468 residues: Tyramine receptor tyra-2 (468 aa).

Over 1–23 (MMSSYVMSPVDETYTLFQILKGS) the chain is Extracellular. A helical transmembrane segment spans residues 24-43 (ALFLLVLWTIFANSLVFIVL). Residues 44–54 (YKNPRLQTVPN) lie on the Cytoplasmic side of the membrane. The chain crosses the membrane as a helical span at residues 55–77 (LLVGNLAFSDLALGLIVLPLSSV). At 78–91 (YAIAGEWVFPDALC) the chain is on the extracellular side. An intrachain disulfide couples cysteine 91 to cysteine 177. The helical transmembrane segment at 92 to 114 (EVFVSADILCSTASIWNLSIVGL) threads the bilayer. Topologically, residues 115-134 (DRYWAITSPVAYMSKRNKRT) are cytoplasmic. Residues 135–157 (AGIMILSVWISSALISLAPLLGW) form a helical membrane-spanning segment. Residues 158–186 (KQTAQTPNLIYEKNNTVRQCTFLDLPSYT) are Extracellular-facing. N-linked (GlcNAc...) asparagine glycosylation occurs at asparagine 171. The chain crosses the membrane as a helical span at residues 187 to 209 (VYSATGSFFIPTLLMFFVYFKIY). At 210–387 (QAFAKHRARQ…SAAKERRGVK (178 aa)) the chain is on the cytoplasmic side. Residues 252-306 (DEFAKEEEEEEDSESSGQVENGLGNGNDAIIEEDECEDEDSDEKRDDHTSMTTVT) are disordered. Composition is skewed to acidic residues over residues 255–265 (AKEEEEEEDSE) and 281–292 (IIEEDECEDEDS). A helical membrane pass occupies residues 388–410 (VLGIILGCFTVCWAPFFTMYVLV). Over 411–424 (QFCKDCSPNAHIEM) the chain is Extracellular. A helical transmembrane segment spans residues 425–444 (FITWLGYSNSAMNPIIYTVF). The Cytoplasmic segment spans residues 445 to 468 (NRDYQIALKRLFTSEKKPSSTSRV).

The protein belongs to the G-protein coupled receptor 1 family. As to expression, expressed in the pharyngeal neurons, MCL/R and NSML/R and the AS group of amphidial sensory neurons, ASEL/R, AGSL/R, ASHL/R and ASIL/R.

The protein resides in the cell membrane. Its function is as follows. G-protein coupled receptor for tyramine, a known neurotransmitter and neuromodulator and direct precursor of octopamine. Expression in amphidial sensory neurons suggests a role in chemosensation. In Caenorhabditis elegans, this protein is Tyramine receptor tyra-2 (tyra-2).